Reading from the N-terminus, the 422-residue chain is Protein king tubby 2 (422 aa).

Residues 49–169 (PSNPDQIISS…ASGHNDAEGD (121 aa)) are disordered. A compositionally biased stretch (low complexity) spans 57–81 (SSGSPTTVTATGTTTGSVTTTPTSP).

The protein belongs to the TUB family.

The protein resides in the cytoplasm. Its subcellular location is the nucleus. This Culex quinquefasciatus (Southern house mosquito) protein is Protein king tubby 2 (king-tubby2).